We begin with the raw amino-acid sequence, 26 residues long: Peroxidase 1 (26 aa).

Residue aspartate 15 participates in Ca(2+) binding.

The protein belongs to the peroxidase family. Classical plant (class III) peroxidase subfamily. Heme b is required as a cofactor. Ca(2+) serves as cofactor.

The protein resides in the secreted. The catalysed reaction is 2 a phenolic donor + H2O2 = 2 a phenolic radical donor + 2 H2O. In terms of biological role, removal of H(2)O(2), oxidation of toxic reductants, biosynthesis and degradation of lignin, suberization, auxin catabolism, response to environmental stresses such as wounding, pathogen attack and oxidative stress. These functions might be dependent on each isozyme/isoform in each plant tissue. The polypeptide is Peroxidase 1 (Vitis vinifera (Grape)).